A 469-amino-acid chain; its full sequence is Iron-sulfur cluster assembly factor IBA57 homolog, mitochondrial (469 aa).

The transit peptide at 1–43 directs the protein to the mitochondrion; that stretch reads MSLPIAGLAQLSKGIIQVVGKDATKFLNGLITSRMLPNVVKKK. The interval 387–415 is disordered; that stretch reads ESKSASPFASSPFGGESKKSRRRKASSGK. Over residues 390–401 the composition is skewed to low complexity; it reads SASPFASSPFGG.

This sequence belongs to the GcvT family. CAF17/IBA57 subfamily.

It is found in the mitochondrion matrix. This is Iron-sulfur cluster assembly factor IBA57 homolog, mitochondrial (CAF17) from Scheffersomyces stipitis (strain ATCC 58785 / CBS 6054 / NBRC 10063 / NRRL Y-11545) (Yeast).